The sequence spans 360 residues: Mitogen-activated protein kinase 14 (360 aa).

At Ser2 the chain carries N-acetylserine. Residue Ser2 is modified to Phosphoserine. Residue Thr16 is modified to Phosphothreonine. Positions 24–308 constitute a Protein kinase domain; that stretch reads YQNLSPVGSG…AAQALAHAYF (285 aa). Residues 30 to 38 and Lys53 each bind ATP; that span reads VGSGAYGSV. Position 53 is an N6-acetyllysine (Lys53). Asp150 functions as the Proton acceptor in the catalytic mechanism. Lys152 is subject to N6-acetyllysine. Thr180 is subject to Phosphothreonine; by MAP2K3, MAP2K4, MAP2K6 and autocatalysis. Position 182 is a phosphotyrosine; by MAP2K3, MAP2K4, MAP2K6 and autocatalysis (Tyr182). Thr263 carries the post-translational modification Phosphothreonine. Tyr323 carries the phosphotyrosine; by ZAP70 modification.

Belongs to the protein kinase superfamily. CMGC Ser/Thr protein kinase family. MAP kinase subfamily. As to quaternary structure, component of a signaling complex containing at least AKAP13, PKN1, MAPK14, ZAK and MAP2K3. Within this complex, AKAP13 interacts directly with PKN1, which in turn recruits MAPK14, MAP2K3 and ZAK. Binds to a kinase interaction motif within the protein tyrosine phosphatase, PTPRR. This interaction retains MAPK14 in the cytoplasm and prevents nuclear accumulation. Interacts with SPAG9 and GADD45A. Interacts with CDC25B, CDC25C, DUSP1, DUSP10, DUSP16, NP60, SUPT20H and TAB1. Interacts with casein kinase II subunits CSNK2A1 and CSNK2B. Interacts with PPM1D. Interacts with CDK5RAP3; recruits PPM1D to MAPK14 and may regulate its dephosphorylation. Interacts with DUSP2; this interaction does not lead to catalytic activation of DUSP2 and dephosphrylation of MAPK14. Mg(2+) serves as cofactor. In terms of processing, dually phosphorylated on Thr-180 and Tyr-182 by the MAP2Ks MAP2K3/MKK3, MAP2K4/MKK4 and MAP2K6/MKK6 in response to inflammatory cytokines, environmental stress or growth factors, which activates the enzyme. Dual phosphorylation can also be mediated by TAB1-mediated autophosphorylation. TCR engagement in T-cells also leads to Tyr-323 phosphorylation by ZAP70. Dephosphorylated and inactivated by DUPS1, DUSP10 and DUSP16. PPM1D also mediates dephosphorylation and inactivation of MAPK14. Acetylated at Lys-53 and Lys-152 by KAT2B and EP300. Acetylation at Lys-53 increases the affinity for ATP and enhances kinase activity. Lys-53 and Lys-152 are deacetylated by HDAC3. Post-translationally, ubiquitinated. Ubiquitination leads to degradation by the proteasome pathway.

It localises to the cytoplasm. The protein resides in the nucleus. It catalyses the reaction L-seryl-[protein] + ATP = O-phospho-L-seryl-[protein] + ADP + H(+). The catalysed reaction is L-threonyl-[protein] + ATP = O-phospho-L-threonyl-[protein] + ADP + H(+). Activated by cell stresses such as DNA damage, heat shock, osmotic shock, anisomycin and sodium arsenite, as well as pro-inflammatory stimuli such as bacterial lipopolysaccharide (LPS) and interleukin-1. Activation occurs through dual phosphorylation of Thr-180 and Tyr-182 by either of two dual specificity kinases, MAP2K3/MKK3 or MAP2K6/MKK6, and potentially also MAP2K4/MKK4, as well as by TAB1-mediated autophosphorylation. MAPK14 phosphorylated on both Thr-180 and Tyr-182 is 10-20-fold more active than MAPK14 phosphorylated only on Thr-180, whereas MAPK14 phosphorylated on Tyr-182 alone is inactive. whereas Thr-180 is necessary for catalysis, Tyr-182 may be required for auto-activation and substrate recognition. Phosphorylated at Tyr-323 by ZAP70 in an alternative activation pathway in response to TCR signaling in T-cells. This alternative pathway is inhibited by GADD45A. Inhibited by dual specificity phosphatases, such as DUSP1, DUSP10, and DUSP16. Specifically inhibited by the binding of pyridinyl-imidazole compounds, which are cytokine-suppressive anti-inflammatory drugs (CSAID). SB203580 is an inhibitor of MAPK14. Its function is as follows. Serine/threonine kinase which acts as an essential component of the MAP kinase signal transduction pathway. MAPK14 is one of the four p38 MAPKs which play an important role in the cascades of cellular responses evoked by extracellular stimuli such as pro-inflammatory cytokines or physical stress leading to direct activation of transcription factors. Accordingly, p38 MAPKs phosphorylate a broad range of proteins and it has been estimated that they may have approximately 200 to 300 substrates each. Some of the targets are downstream kinases which are activated through phosphorylation and further phosphorylate additional targets. RPS6KA5/MSK1 and RPS6KA4/MSK2 can directly phosphorylate and activate transcription factors such as CREB1, ATF1, the NF-kappa-B isoform RELA/NFKB3, STAT1 and STAT3, but can also phosphorylate histone H3 and the nucleosomal protein HMGN1. RPS6KA5/MSK1 and RPS6KA4/MSK2 play important roles in the rapid induction of immediate-early genes in response to stress or mitogenic stimuli, either by inducing chromatin remodeling or by recruiting the transcription machinery. On the other hand, two other kinase targets, MAPKAPK2/MK2 and MAPKAPK3/MK3, participate in the control of gene expression mostly at the post-transcriptional level, by phosphorylating ZFP36 (tristetraprolin) and ELAVL1, and by regulating EEF2K, which is important for the elongation of mRNA during translation. MKNK1/MNK1 and MKNK2/MNK2, two other kinases activated by p38 MAPKs, regulate protein synthesis by phosphorylating the initiation factor EIF4E2. MAPK14 also interacts with casein kinase II, leading to its activation through autophosphorylation and further phosphorylation of TP53/p53. In the cytoplasm, the p38 MAPK pathway is an important regulator of protein turnover. For example, CFLAR is an inhibitor of TNF-induced apoptosis whose proteasome-mediated degradation is regulated by p38 MAPK phosphorylation. In a similar way, MAPK14 phosphorylates the ubiquitin ligase SIAH2, regulating its activity towards EGLN3. MAPK14 may also inhibit the lysosomal degradation pathway of autophagy by interfering with the intracellular trafficking of the transmembrane protein ATG9. Another function of MAPK14 is to regulate the endocytosis of membrane receptors by different mechanisms that impinge on the small GTPase RAB5A. In addition, clathrin-mediated EGFR internalization induced by inflammatory cytokines and UV irradiation depends on MAPK14-mediated phosphorylation of EGFR itself as well as of RAB5A effectors. Ectodomain shedding of transmembrane proteins is regulated by p38 MAPKs as well. In response to inflammatory stimuli, p38 MAPKs phosphorylate the membrane-associated metalloprotease ADAM17. Such phosphorylation is required for ADAM17-mediated ectodomain shedding of TGF-alpha family ligands, which results in the activation of EGFR signaling and cell proliferation. Another p38 MAPK substrate is FGFR1. FGFR1 can be translocated from the extracellular space into the cytosol and nucleus of target cells, and regulates processes such as rRNA synthesis and cell growth. FGFR1 translocation requires p38 MAPK activation. In the nucleus, many transcription factors are phosphorylated and activated by p38 MAPKs in response to different stimuli. Classical examples include ATF1, ATF2, ATF6, ELK1, PTPRH, DDIT3, TP53/p53 and MEF2C and MEF2A. The p38 MAPKs are emerging as important modulators of gene expression by regulating chromatin modifiers and remodelers. The promoters of several genes involved in the inflammatory response, such as IL6, IL8 and IL12B, display a p38 MAPK-dependent enrichment of histone H3 phosphorylation on 'Ser-10' (H3S10ph) in LPS-stimulated myeloid cells. This phosphorylation enhances the accessibility of the cryptic NF-kappa-B-binding sites marking promoters for increased NF-kappa-B recruitment. Phosphorylates CDC25B and CDC25C which is required for binding to 14-3-3 proteins and leads to initiation of a G2 delay after ultraviolet radiation. Phosphorylates TIAR following DNA damage, releasing TIAR from GADD45A mRNA and preventing mRNA degradation. The p38 MAPKs may also have kinase-independent roles, which are thought to be due to the binding to targets in the absence of phosphorylation. Protein O-Glc-N-acylation catalyzed by the OGT is regulated by MAPK14, and, although OGT does not seem to be phosphorylated by MAPK14, their interaction increases upon MAPK14 activation induced by glucose deprivation. This interaction may regulate OGT activity by recruiting it to specific targets such as neurofilament H, stimulating its O-Glc-N-acylation. Required in mid-fetal development for the growth of embryo-derived blood vessels in the labyrinth layer of the placenta. Also plays an essential role in developmental and stress-induced erythropoiesis, through regulation of EPO gene expression. Phosphorylates S100A9 at 'Thr-113'. This is Mitogen-activated protein kinase 14 from Pan troglodytes (Chimpanzee).